The following is a 238-amino-acid chain: DNA repair protein RecO (238 aa).

This sequence belongs to the RecO family.

Involved in DNA repair and RecF pathway recombination. The chain is DNA repair protein RecO from Cereibacter sphaeroides (strain ATCC 17023 / DSM 158 / JCM 6121 / CCUG 31486 / LMG 2827 / NBRC 12203 / NCIMB 8253 / ATH 2.4.1.) (Rhodobacter sphaeroides).